Reading from the N-terminus, the 547-residue chain is Chaperonin GroEL 1 (547 aa).

ATP-binding positions include 30–33, K51, 87–91, G415, and D496; these read TLGP and DGTTT.

The protein belongs to the chaperonin (HSP60) family. Forms a cylinder of 14 subunits composed of two heptameric rings stacked back-to-back. Interacts with the co-chaperonin GroES.

Its subcellular location is the cytoplasm. The enzyme catalyses ATP + H2O + a folded polypeptide = ADP + phosphate + an unfolded polypeptide.. Functionally, together with its co-chaperonin GroES, plays an essential role in assisting protein folding. The GroEL-GroES system forms a nano-cage that allows encapsulation of the non-native substrate proteins and provides a physical environment optimized to promote and accelerate protein folding. In Bradyrhizobium sp. (strain BTAi1 / ATCC BAA-1182), this protein is Chaperonin GroEL 1.